The sequence spans 482 residues: Abscisic acid 8'-hydroxylase 2 (482 aa).

A helical membrane pass occupies residues 20-40 (PALITLTIVVVVVVLLFKWWL). Residue cysteine 431 coordinates heme.

This sequence belongs to the cytochrome P450 family. Heme is required as a cofactor. As to expression, mainly expressed in dry seeds. Lower expression in rosette leaves, flowers, siliques and stems. Not expressed in roots. Expressed in both endosperm and vascular tissues of embryo during the seed development and in cortex and endodermis in germinating embryo.

The protein resides in the membrane. The catalysed reaction is 2-cis-(+)-abscisate + reduced [NADPH--hemoprotein reductase] + O2 = (+)-8'-hydroxyabscisate + oxidized [NADPH--hemoprotein reductase] + H2O + H(+). The protein operates within plant hormone degradation; abscisic acid degradation. Functionally, involved in the oxidative degradation of abscisic acid, but not in the isomerization of the produced 8'-hydroxyabscisic acid (8'-OH-ABA) to (-)-phaseic acid (PA). Involved in the control of seed dormancy and germination. The polypeptide is Abscisic acid 8'-hydroxylase 2 (CYP707A2) (Arabidopsis thaliana (Mouse-ear cress)).